Here is a 246-residue protein sequence, read N- to C-terminus: tRNA (guanine-N(1)-)-methyltransferase (246 aa).

Residues glycine 113 and 133 to 138 (IGDYVL) contribute to the S-adenosyl-L-methionine site.

Belongs to the RNA methyltransferase TrmD family. As to quaternary structure, homodimer.

The protein resides in the cytoplasm. It catalyses the reaction guanosine(37) in tRNA + S-adenosyl-L-methionine = N(1)-methylguanosine(37) in tRNA + S-adenosyl-L-homocysteine + H(+). In terms of biological role, specifically methylates guanosine-37 in various tRNAs. The polypeptide is tRNA (guanine-N(1)-)-methyltransferase (Haemophilus influenzae (strain 86-028NP)).